The following is a 100-amino-acid chain: Large ribosomal subunit protein uL23 (100 aa).

This sequence belongs to the universal ribosomal protein uL23 family. As to quaternary structure, part of the 50S ribosomal subunit. Contacts protein L29, and trigger factor when it is bound to the ribosome.

One of the early assembly proteins it binds 23S rRNA. One of the proteins that surrounds the polypeptide exit tunnel on the outside of the ribosome. Forms the main docking site for trigger factor binding to the ribosome. The chain is Large ribosomal subunit protein uL23 from Lactobacillus acidophilus (strain ATCC 700396 / NCK56 / N2 / NCFM).